A 118-amino-acid chain; its full sequence is MNRRAAAERQGRTGERIAAWWLRLHGWRIVGSRVKTRRGEVDLIARRGRTLAFVEVKTRGDAAGLATAIDEYRLRRVAAAAEALLPRYGVGVENVRIDVMLVRPWRRPVHLTNVWHGQ.

The protein belongs to the UPF0102 family.

This chain is UPF0102 protein Swit_0572, found in Rhizorhabdus wittichii (strain DSM 6014 / CCUG 31198 / JCM 15750 / NBRC 105917 / EY 4224 / RW1) (Sphingomonas wittichii).